Consider the following 245-residue polypeptide: Membrane-associated progesterone-binding protein 4 (245 aa).

A helical transmembrane segment spans residues 6 to 26 (RFLLSPFVGVTFIVVLVSLYF). One can recognise a Cytochrome b5 heme-binding domain in the interval 39 to 138 (KRLFSAEELA…RTYTPVGKLV (100 aa)). A steroid-binding region spans residues 45–138 (EELALYNGTD…RTYTPVGKLV (94 aa)).

This sequence belongs to the cytochrome b5 family. MAPR subfamily.

It is found in the membrane. This Arabidopsis thaliana (Mouse-ear cress) protein is Membrane-associated progesterone-binding protein 4.